Consider the following 285-residue polypeptide: Sulfotransferase 2A1 (285 aa).

3'-phosphoadenylyl sulfate contacts are provided by Lys44, Ser45, Gly46, Thr47, Asn48, and Trp49. The Proton acceptor role is filled by His99. 3'-phosphoadenylyl sulfate-binding residues include Arg121, Ser129, Tyr184, Ser218, Met223, Arg247, Lys248, and Gly249.

It belongs to the sulfotransferase 1 family. As to quaternary structure, homodimer. Highly expressed in liver.

The protein resides in the cytoplasm. The catalysed reaction is an alcohol + 3'-phosphoadenylyl sulfate = an alkyl sulfate + adenosine 3',5'-bisphosphate + H(+). It catalyses the reaction taurolithocholate + 3'-phosphoadenylyl sulfate = taurolithocholate 3-sulfate + adenosine 3',5'-bisphosphate + H(+). The enzyme catalyses pregnenolone + 3'-phosphoadenylyl sulfate = pregnenolone sulfate + adenosine 3',5'-bisphosphate + H(+). It carries out the reaction 3beta-hydroxyandrost-5-en-17-one + 3'-phosphoadenylyl sulfate = dehydroepiandrosterone 3-sulfate + adenosine 3',5'-bisphosphate + H(+). The catalysed reaction is lithocholate + 3'-phosphoadenylyl sulfate = lithocholate sulfate + adenosine 3',5'-bisphosphate + H(+). It catalyses the reaction (24S)-hydroxycholesterol + 3'-phosphoadenylyl sulfate = (24S)-hydroxycholesterol 24-sulfate + adenosine 3',5'-bisphosphate + H(+). The enzyme catalyses (24S)-hydroxycholesterol + 3'-phosphoadenylyl sulfate = (24S)-hydroxycholesterol 3-sulfate + adenosine 3',5'-bisphosphate + H(+). It carries out the reaction (24S)-hydroxycholesterol 24-sulfate + 3'-phosphoadenylyl sulfate = (24S)-hydroxycholesterol 3,24-disulfate + adenosine 3',5'-bisphosphate + H(+). The catalysed reaction is androsterone + 3'-phosphoadenylyl sulfate = androsterone 3alpha-sulfate + adenosine 3',5'-bisphosphate + H(+). Functionally, sulfotransferase that utilizes 3'-phospho-5'-adenylyl sulfate (PAPS) as sulfonate donor to catalyze the sulfonation of steroids and bile acids in the liver and adrenal glands. Mediates the sulfation of a wide range of steroids and sterols, including pregnenolone, androsterone, DHEA, bile acids, cholesterol and as well many xenobiotics that contain alcohol and phenol functional groups. Sulfonation increases the water solubility of most compounds, and therefore their renal excretion, but it can also result in bioactivation to form active metabolites. Plays an important role in maintening steroid and lipid homeostasis. Plays a key role in bile acid metabolism. In addition, catalyzes the metabolic activation of potent carcinogenic polycyclic arylmethanols. The polypeptide is Sulfotransferase 2A1 (Sult2a1) (Mus musculus (Mouse)).